Consider the following 1117-residue polypeptide: MKKASRSVGSVPKVSGISKTQTVEKTKPENSSSASTGGKVIKTGTTASLSKTKSSDDLLAGMAGGVTVTNGVKGKKSTCPSTGSSASAPAMTTVENKSKISTGTSSSTKRSTSIGNKESSSTRERLRERTRLNQSKKLPSAGQGANDVALAKRSRSRTTTECDVRMSKSKSDNQISDKAALEAKVKDLLTLAKTKDVEILHLRNELRDMRAQLGINEDHSEGDEKSEKEAIIAHQPTDVESTLLQLQEQNTAIREELNQLKNENRMLKDRLNALGFSLEQRLDNSEKLFGYQSLSPEITPGNQSDGGGTLTSSVEGSAPGSVEDLLSQDENTLMDHQHSNSMDNLDSECSEVYQPLTSSDDALDAPSSSESEGIPSIERSRKGSSGNASEVSVACLTERIHQMEENQHSTSEELQATLQELADLQQITQELNSENERLGEEKVILMESLCQQSDKLEHFSRQIEYFRSLLDEHHISYVIDEDVKSGRYMELEQRYMDLAENARFEREQLLGVQQHLSNTLKMAEQDNKEAQEMIGALKERNHHMERIIESEQKGKAALAATLEEYKATVASDQIEMNRLKAQLENEKQKVAELYSIHNSGDKSDIQDLLESVRLDKEKAETLASSLQEDLAHTRNDANRLQDTIAKVEDEYRAFQEEAKKQIEELNMTLEKLRSELEEKETERSDMKETIFELEDEVEQHRAVKLHDNLIISDLENTVKKLQDQKHDMEREIKTLHRRLREESAEWRQFQADLQTAVVIANDIKSEAQEEIGDLKRRLHEAQEKNEKLTKELEEIKSRKQEEERGRVYNYMNAVERDLAALRQGMGLSRRSSTSSEPTPTVKTLIKSFDSASQVPNPTAAAIPRTPLSPSPMKTPPAAAVSPMQRHSISGPISTSKPLTALSDKRPNYGEIPVQEHLLRTSSTSRPASLPRVPAMESAKTISVSRRSSEEMKRDISAPEGASPASLMAMGTTSPQLSLSSSPTASVTPTTRSRIREERKDPLSALAREYGGSKRNALLKWCQKKTEGYQNIDITNFSSSWNDGLAFCALLHTYLPAHIPYQELNSQDKRRNFTLAFQAAESVGIKSTLDINEMVRTERPDWQSVMLYVTAIYKYFET.

3 disordered regions span residues 1–176 (MKKA…NQIS), 293–323 (SLSP…GSVE), and 358–390 (SSDD…NASE). Low complexity-rich tracts occupy residues 45–72 (TTAS…TNGV) and 99–119 (KIST…NKES). Composition is skewed to basic and acidic residues over residues 120–131 (SSTRERLRERTR) and 158–171 (TTTE…KSKS). Positions 168-280 (KSKSDNQISD…LNALGFSLEQ (113 aa)) form a coiled coil. The segment covering 293 to 303 (SLSPEITPGNQ) has biased composition (polar residues). Residues 358 to 377 (SSDDALDAPSSSESEGIPSI) are compositionally biased toward low complexity. Serine 384, serine 385, and serine 389 each carry phosphoserine. Coiled-coil stretches lie at residues 394–449 (ACLT…MESL) and 487–807 (RYME…RGRV). Residues 852-878 (SQVPNPTAAAIPRTPLSPSPMKTPPAA) form a disordered region. Residues serine 868, serine 881, and serine 887 each carry the phosphoserine modification. Residues 920-997 (TSSTSRPASL…PTTRSRIREE (78 aa)) are disordered. The segment covering 946–956 (RSSEEMKRDIS) has biased composition (basic and acidic residues). Positions 971 to 990 (TTSPQLSLSSSPTASVTPTT) are enriched in low complexity. Residues 1011-1116 (GSKRNALLKW…YVTAIYKYFE (106 aa)) enclose the Calponin-homology (CH) domain.

It belongs to the cytospin-A family. May interact with both microtubules and actin cytoskeleton.

It is found in the cytoplasm. The protein localises to the cytoskeleton. Its subcellular location is the spindle. It localises to the cell junction. The protein resides in the gap junction. Its function is as follows. Involved in cytokinesis and spindle organization. May play a role in actin cytoskeleton organization and microtubule stabilization and hence required for proper cell adhesion and migration. The protein is Cytospin-A (SPECC1L) of Canis lupus familiaris (Dog).